Reading from the N-terminus, the 260-residue chain is MAFVPPQAGYDRAITVFSPDGRLFQVNYAREAVKRGATAVGVKCNEGVVLAVEKRITSRLIEPESYEKIFQIDDHIAAASSGIIADARVLVNRARLEAQIHRLTYGEPAPLAVIVKKICDLKQMHTQYGGVRPFGAALLMAGVNEKPELYETDPSGAYFAWKAVAIGSGRNTAMAIFEEKYKDDMSLEEAIKLAIFALAKTMEKPSAENIEVAIITVKDKKFRKLSREEIEKYLNEVMKEVEEEEVKEKEEDYSELDSHY.

The tract at residues 241 to 260 (VEEEEVKEKEEDYSELDSHY) is disordered.

Belongs to the peptidase T1A family. The 20S proteasome core is composed of 14 alpha and 14 beta subunits that assemble into four stacked heptameric rings, resulting in a barrel-shaped structure. The two inner rings, each composed of seven catalytic beta subunits, are sandwiched by two outer rings, each composed of seven alpha subunits. The catalytic chamber with the active sites is on the inside of the barrel. Has a gated structure, the ends of the cylinder being occluded by the N-termini of the alpha-subunits. Is capped at one or both ends by the proteasome regulatory ATPase, PAN.

It localises to the cytoplasm. Its activity is regulated as follows. The formation of the proteasomal ATPase PAN-20S proteasome complex, via the docking of the C-termini of PAN into the intersubunit pockets in the alpha-rings, triggers opening of the gate for substrate entry. Interconversion between the open-gate and close-gate conformations leads to a dynamic regulation of the 20S proteasome proteolysis activity. Component of the proteasome core, a large protease complex with broad specificity involved in protein degradation. The protein is Proteasome subunit alpha of Pyrococcus horikoshii (strain ATCC 700860 / DSM 12428 / JCM 9974 / NBRC 100139 / OT-3).